The chain runs to 207 residues: Nitrophorin-1 (207 aa).

A signal peptide spans 1-23; sequence MKSYTALLAVAILCLFAAVGVSG. Intrachain disulfides connect Cys-25/Cys-145 and Cys-64/Cys-194. His-82 contacts heme.

It belongs to the calycin superfamily. Nitrophorin family. Salivary gland (at protein level).

The protein localises to the secreted. Functionally, heme-based protein that deliver nitric oxide gas (NO) to the victim while feeding, resulting in vasodilation and inhibition of platelet aggregation. Reversibly binds nitric oxide (NO). Also binds tightly to histamine, which is released by the host to induce wound healing. In Rhodnius prolixus (Triatomid bug), this protein is Nitrophorin-1.